The primary structure comprises 412 residues: Keratin, type I microfibrillar 48 kDa, component 8C-1 (412 aa).

Residue serine 1 is modified to N-acetylserine. The interval 1-55 (SFNFCLPNLSFRSSCSSRPCVPSSCCGTTLPGACNIPANVGSCNWFCEGSFDGNE) is head. In terms of domain architecture, IF rod spans 55 to 366 (EKETMQFLND…GLLDSEDCKL (312 aa)). The coil 1A stretch occupies residues 56 to 90 (KETMQFLNDRLASYLEKVRQLERENAELESRILER). The tract at residues 91–101 (SQQQEPLVCPN) is linker 1. The tract at residues 102 to 202 (YQSYFRTIEE…HEEEVNTLRS (101 aa)) is coil 1B. Residues 203 to 218 (QLGDRLNVEVDAAPTV) are linker 12. Residues 219–362 (DLNRVLNETR…NTYRGLLDSE (144 aa)) form a coil 2 region. The tail stretch occupies residues 363-412 (DCKLPCNPCATTNACGKTITPCISSPCAPAAPCTPCVPRSRCGPCNSYVR).

Belongs to the intermediate filament family.

In terms of biological role, wool microfibrillar keratin. The chain is Keratin, type I microfibrillar 48 kDa, component 8C-1 from Ovis aries (Sheep).